A 598-amino-acid chain; its full sequence is Probable ATP-dependent RNA helicase DDX52 (598 aa).

Lys15 carries the N6-acetyllysine modification. Position 39 is a phosphoserine (Ser39). The disordered stretch occupies residues 59 to 98 (CGGLQTQQELQNEETTEGGLLERSKEPKKKKRKKMTADVP). The Q motif signature appears at 166–194 (QLDQEYKISPRLLQNILDAGFQVPTPIQM). The Helicase ATP-binding domain maps to 197 to 375 (IPVMLHGREL…KLNLDNIVSV (179 aa)). ATP is bound at residue 210 to 217 (APTGSGKT). The DEAD box motif lies at 319 to 322 (DESD). In terms of domain architecture, Helicase C-terminal spans 386–547 (TVEQELLFVG…PVPEYIKGFQ (162 aa)). A disordered region spans residues 578–598 (AKQKKVAGQNSKKKETLKGKS). Positions 589-598 (KKKETLKGKS) are enriched in basic and acidic residues.

The protein belongs to the DEAD box helicase family. DDX52/ROK1 subfamily.

Its subcellular location is the nucleus. The protein localises to the nucleolus. The enzyme catalyses ATP + H2O = ADP + phosphate + H(+). In terms of biological role, required for efficient ribosome biogenesis. May control cell cycle progression by regulating translation of mRNAs that contain a terminal oligo pyrimidine (TOP) motif in their 5' UTRs, such as GTPBP4. This chain is Probable ATP-dependent RNA helicase DDX52 (Ddx52), found in Rattus norvegicus (Rat).